Reading from the N-terminus, the 173-residue chain is Photosystem I assembly protein Ycf3 (173 aa).

TPR repeat units lie at residues 35-68, 72-105, and 120-153; these read AFSY…EEDP, SYIL…NFKL, and GVQA…APDN.

Belongs to the Ycf3 family.

It localises to the plastid. It is found in the chloroplast thylakoid membrane. Its function is as follows. Essential for the assembly of the photosystem I (PSI) complex. May act as a chaperone-like factor to guide the assembly of the PSI subunits. This chain is Photosystem I assembly protein Ycf3, found in Porphyra purpurea (Red seaweed).